A 433-amino-acid polypeptide reads, in one-letter code: N-lysine methyltransferase SMYD2 (433 aa).

An SET domain is found at 7 to 241 (GGLERFCSPG…PGEEVFTSYI (235 aa)). 17 to 19 (KGR) lines the S-adenosyl-L-methionine pocket. Residues Cys-52, Cys-55, Cys-65, Cys-68, Cys-74, Cys-78, His-86, and Cys-90 each contribute to the Zn(2+) site. Residues 52–90 (CEFCFARKEGLSKCGRCKQAFYCNVECQREDWPMHKLEC) form an MYND-type zinc finger. S-adenosyl-L-methionine contacts are provided by residues His-137, 206–207 (NH), and 258–260 (YFF).

The protein belongs to the class V-like SAM-binding methyltransferase superfamily. Interacts with RNA polymerase II and HELZ. Interacts with SIN3A and HDAC1. Interacts (via MYND-type zinc finger) with EPB41L3. Interacts (via SET domain) with p53/TP53. Interacts with RB1 and HSP90AA1.

It localises to the cytoplasm. It is found in the cytosol. Its subcellular location is the nucleus. The enzyme catalyses L-lysyl(4)-[histone H3] + 3 S-adenosyl-L-methionine = N(6),N(6),N(6)-trimethyl-L-lysyl(4)-[histone H3] + 3 S-adenosyl-L-homocysteine + 3 H(+). The catalysed reaction is L-lysyl-[protein] + S-adenosyl-L-methionine = N(6)-methyl-L-lysyl-[protein] + S-adenosyl-L-homocysteine + H(+). In terms of biological role, protein-lysine N-methyltransferase that methylates both histones and non-histone proteins, including p53/TP53 and RB1. Specifically trimethylates histone H3 'Lys-4' (H3K4me3) in vivo. The activity requires interaction with HSP90alpha. Shows even higher methyltransferase activity on p53/TP53. Monomethylates 'Lys-370' of p53/TP53, leading to decreased DNA-binding activity and subsequent transcriptional regulation activity of p53/TP53. Monomethylates RB1 at 'Lys-860'. In Bos taurus (Bovine), this protein is N-lysine methyltransferase SMYD2 (SMYD2).